Here is a 329-residue protein sequence, read N- to C-terminus: Putative HTH-type transcriptional regulatory protein APE_0778 (329 aa).

One can recognise an HTH cro/C1-type domain in the interval 142 to 200 (LREKRLEKGLSLGHLAYMLKTSRKSIYEYERGVMSPSVEKAEKLVDILGEEILEPIDIL). A DNA-binding region (H-T-H motif) is located at residues 153–172 (LGHLAYMLKTSRKSIYEYER).

In Aeropyrum pernix (strain ATCC 700893 / DSM 11879 / JCM 9820 / NBRC 100138 / K1), this protein is Putative HTH-type transcriptional regulatory protein APE_0778.